A 40-amino-acid chain; its full sequence is MKVRKSLRSLKNKPGAQVVRRHGKVYVINKKDPRFKARQG.

This sequence belongs to the bacterial ribosomal protein bL36 family.

The sequence is that of Large ribosomal subunit protein bL36 from Corynebacterium urealyticum (strain ATCC 43042 / DSM 7109).